The chain runs to 353 residues: ATP-dependent kinase YFH7 (353 aa).

ATP is bound at residue 31–39 (GSPGSGKST).

It belongs to the YFH7 family.

In terms of biological role, ATP-dependent kinase that could be involved in endoplasmic reticulum membrane assembly. This chain is ATP-dependent kinase YFH7 (YFH7), found in Saccharomyces cerevisiae (strain JAY291) (Baker's yeast).